The sequence spans 711 residues: Putative membrane protein IgaA homolog (711 aa).

A topological domain (periplasmic) is located at residue Met-1. Residues 2–22 (STIVIFLAALLACSLLAGWLI) form a helical membrane-spanning segment. Topologically, residues 23–204 (KVRSRRRQLP…YALSRPRGLR (182 aa)) are cytoplasmic. The next 2 helical transmembrane spans lie at 205 to 225 (EALLIVASFLMFFFCLITPDV) and 226 to 246 (FVPWLAGGALLLLGAGLWGLF). Residues 247 to 339 (APPAKSSLRE…KNFPLQHWLR (93 aa)) lie on the Cytoplasmic side of the membrane. The helical transmembrane segment at 340-360 (STIIAAGSLLVLFMLLFWIPL) threads the bilayer. Topologically, residues 361 to 655 (DMPLKFTLSW…IPDRSGLWRY (295 aa)) are periplasmic. A helical transmembrane segment spans residues 656–676 (LSTTLLLLTMLGSAIYNGVQA). The Cytoplasmic segment spans residues 677–711 (WRRYQRHRTRMMEIQAYYESCLNPQLITPSESLIE).

The protein belongs to the IgaA family.

Its subcellular location is the cell inner membrane. This is Putative membrane protein IgaA homolog (yrfF) from Escherichia coli (strain K12).